Reading from the N-terminus, the 341-residue chain is Outer membrane protein U (341 aa).

The N-terminal stretch at 1 to 21 (MNKTLIALAVSAAAVATGAYA) is a signal peptide.

The protein belongs to the Gram-negative porin family. As to quaternary structure, homotrimer.

The protein localises to the cell outer membrane. Functionally, forms pores that allow passive diffusion of small molecules across the outer membrane. This is Outer membrane protein U (ompU) from Vibrio cholerae serotype O1 (strain ATCC 39315 / El Tor Inaba N16961).